The chain runs to 305 residues: Superkiller complex protein 8 (305 aa).

An N-acetylmethionine modification is found at methionine 1. Threonine 2 is subject to N-acetylthreonine; in WD repeat-containing protein 61, N-terminally processed. WD repeat units lie at residues 14–57, 62–101, 104–143, 146–187, 188–227, 230–269, and 272–305; these read AHDD…LELQ, GHQL…QMKS, AGPV…KEYS, TRGK…HTLE, GHAM…LAGT, GHAS…CIHT, and DHQD…DCPI.

This sequence belongs to the SKI8 family. In terms of assembly, component of the PAF1 complex, which consists of CDC73, PAF1, LEO1, CTR9, RTF1 and SKIC8. The PAF1 complex interacts with PHF5A. Within the PAF1 complex interacts directly with PHF5A. Component of the SKI complex which consists of SKIC2, SKIC3 and SKIC8.

The protein resides in the nucleus. Its subcellular location is the cytoplasm. Its function is as follows. Component of the PAF1 complex (PAF1C) which has multiple functions during transcription by RNA polymerase II and is implicated in regulation of development and maintenance of embryonic stem cell pluripotency. PAF1C associates with RNA polymerase II through interaction with POLR2A CTD non-phosphorylated and 'Ser-2'- and 'Ser-5'-phosphorylated forms and is involved in transcriptional elongation, acting both independently and synergistically with TCEA1 and in cooperation with the DSIF complex and HTATSF1. PAF1C is required for transcription of Hox and Wnt target genes. PAF1C is involved in hematopoiesis and stimulates transcriptional activity of KMT2A/MLL1; it promotes leukemogenesis through association with KMT2A/MLL1-rearranged oncoproteins, such as KMT2A/MLL1-MLLT3/AF9 and KMT2A/MLL1-MLLT1/ENL. PAF1C is involved in histone modifications such as ubiquitination of histone H2B and methylation on histone H3 'Lys-4' (H3K4me3). PAF1C recruits the RNF20/40 E3 ubiquitin-protein ligase complex and the E2 enzyme UBE2A or UBE2B to chromatin which mediate monoubiquitination of 'Lys-120' of histone H2B (H2BK120ub1); UB2A/B-mediated H2B ubiquitination is proposed to be coupled to transcription. PAF1C is involved in mRNA 3' end formation probably through association with cleavage and poly(A) factors. In case of infection by influenza A strain H3N2, PAF1C associates with viral NS1 protein, thereby regulating gene transcription. Required for mono- and trimethylation on histone H3 'Lys-4' (H3K4me3), dimethylation on histone H3 'Lys-79' (H3K4me3). Required for Hox gene transcription. Also acts as a component of the SKI complex, a multiprotein complex that assists the RNA-degrading exosome during the mRNA decay and quality-control pathways. The SKI complex catalyzes mRNA extraction from 80S ribosomal complexes in the 3'-5' direction and channels mRNA to the cytosolic exosome for degradation. SKI-mediated extraction of mRNA from stalled ribosomes allow binding of the Pelota-HBS1L complex and subsequent ribosome disassembly by ABCE1 for ribosome recycling. The sequence is that of Superkiller complex protein 8 (Skic8) from Mus musculus (Mouse).